The primary structure comprises 182 residues: MSRIGKMPIKVPLGIKVDINGNDVTVKGPKGTLSRSFRPEVTINREGDYLVVAPVGTDKATRAFFGLSRTLLDNMIVGVKDGFDKNLEIVGVGMRADKDGDKVVFKVGFSHSVTVAPPAGITLSVDGTTKVKVSGINKEDVGQMAAEIRSIRKPDHYMGKGIRYAGEYVRIKPGKAIGKGAK.

It belongs to the universal ribosomal protein uL6 family. As to quaternary structure, part of the 50S ribosomal subunit.

Its function is as follows. This protein binds to the 23S rRNA, and is important in its secondary structure. It is located near the subunit interface in the base of the L7/L12 stalk, and near the tRNA binding site of the peptidyltransferase center. In Dehalococcoides mccartyi (strain ATCC BAA-2100 / JCM 16839 / KCTC 5957 / BAV1), this protein is Large ribosomal subunit protein uL6.